Consider the following 139-residue polypeptide: Cytochrome c2 (139 aa).

A signal peptide spans 1–25 (MVKKLLTILSIAATAGSLSIGTASA). At Gln-26 the chain carries Pyrrolidone carboxylic acid. Positions 38, 41, 42, and 118 each coordinate heme c.

This sequence belongs to the cytochrome c family. In terms of processing, binds 1 heme c group covalently per subunit.

Cytochrome c2 is found mainly in purple, non-sulfur, photosynthetic bacteria where it functions as the electron donor to the oxidized bacteriochlorophyll in the photophosphorylation pathway. However, it may also have a role in the respiratory chain and is found in some non-photosynthetic bacteria. In Rhodopseudomonas palustris (strain ATCC BAA-98 / CGA009), this protein is Cytochrome c2 (cycA).